The following is a 65-amino-acid chain: MEPACRKDKQKQQTPTRGDRTKQKTAQQELKQRQRAEIYALNKVMTELEQQQFEAFCKQMQSQSE.

Residues 1–22 (MEPACRKDKQKQQTPTRGDRTK) show a composition bias toward basic and acidic residues. A disordered region spans residues 1-30 (MEPACRKDKQKQQTPTRGDRTKQKTAQQEL). A coiled-coil region spans residues 31–51 (KQRQRAEIYALNKVMTELEQQ).

This sequence belongs to the SVBP family.

The protein resides in the cytoplasm. It localises to the secreted. It is found in the cytoskeleton. In terms of biological role, enhances the tyrosine carboxypeptidase activity of vash1 and vash2, thereby promoting the removal of the C-terminal tyrosine residue of alpha-tubulin. Also required to enhance the solubility and secretion of vash1 and vash2. May play a role in axon and excitatory synapse formation. The polypeptide is Small vasohibin-binding protein (Danio rerio (Zebrafish)).